We begin with the raw amino-acid sequence, 225 residues long: ATP-dependent Clp protease proteolytic subunit (225 aa).

Catalysis depends on Ser-123, which acts as the Nucleophile. His-148 is an active-site residue.

Belongs to the peptidase S14 family. Fourteen ClpP subunits assemble into 2 heptameric rings which stack back to back to give a disk-like structure with a central cavity, resembling the structure of eukaryotic proteasomes.

It localises to the cytoplasm. The catalysed reaction is Hydrolysis of proteins to small peptides in the presence of ATP and magnesium. alpha-casein is the usual test substrate. In the absence of ATP, only oligopeptides shorter than five residues are hydrolyzed (such as succinyl-Leu-Tyr-|-NHMec, and Leu-Tyr-Leu-|-Tyr-Trp, in which cleavage of the -Tyr-|-Leu- and -Tyr-|-Trp bonds also occurs).. Cleaves peptides in various proteins in a process that requires ATP hydrolysis. Has a chymotrypsin-like activity. Plays a major role in the degradation of misfolded proteins. This Chlorobium phaeovibrioides (strain DSM 265 / 1930) (Prosthecochloris vibrioformis (strain DSM 265)) protein is ATP-dependent Clp protease proteolytic subunit.